A 341-amino-acid polypeptide reads, in one-letter code: Anthranilate phosphoribosyltransferase (341 aa).

Residues Gly82, 85-86, Thr90, 92-95, 110-118, and Ser122 contribute to the 5-phospho-alpha-D-ribose 1-diphosphate site; these read GD, NIST, and KHGGRSVSS. Residue Gly82 coordinates anthranilate. Ser94 is a Mg(2+) binding site. Arg168 is an anthranilate binding site. Mg(2+) contacts are provided by Asp227 and Glu228.

Belongs to the anthranilate phosphoribosyltransferase family. In terms of assembly, homodimer. The cofactor is Mg(2+).

The enzyme catalyses N-(5-phospho-beta-D-ribosyl)anthranilate + diphosphate = 5-phospho-alpha-D-ribose 1-diphosphate + anthranilate. It participates in amino-acid biosynthesis; L-tryptophan biosynthesis; L-tryptophan from chorismate: step 2/5. Catalyzes the transfer of the phosphoribosyl group of 5-phosphorylribose-1-pyrophosphate (PRPP) to anthranilate to yield N-(5'-phosphoribosyl)-anthranilate (PRA). The protein is Anthranilate phosphoribosyltransferase of Nitrosomonas eutropha (strain DSM 101675 / C91 / Nm57).